Reading from the N-terminus, the 688-residue chain is PTS system glucoside-specific EIICBA component (688 aa).

Residues 3 to 427 (KKLFGQLQRI…FKLKTPGRED (425 aa)) enclose the PTS EIIC type-1 domain. Helical transmembrane passes span 12 to 32 (IGKA…LLAF), 81 to 101 (LGLA…YLIM), 137 to 157 (LVLG…MGAL), 182 to 202 (FVPI…SFAW), 223 to 243 (LTTF…LHHI), 284 to 304 (AFTT…AFAI), 315 to 335 (VVGG…ITEP), 340 to 360 (FLFV…TSFL), 364 to 384 (LLGV…ILYG), and 395 to 415 (LVIP…DFAI). The PTS EIIB type-1 domain occupies 438-519 (AKLPFDVLDA…AKIMSGEITK (82 aa)). Cys460 acts as the Phosphocysteine intermediate; for EIIB activity in catalysis. Residues 560–664 (DQVFAGKMMG…SIVTPMIITN (105 aa)) enclose the PTS EIIA type-1 domain. His612 (tele-phosphohistidine intermediate; for EIIA activity) is an active-site residue.

Its subcellular location is the cell membrane. Its function is as follows. The phosphoenolpyruvate-dependent sugar phosphotransferase system (sugar PTS), a major carbohydrate active -transport system, catalyzes the phosphorylation of incoming sugar substrates concomitantly with their translocation across the cell membrane. This system is involved in alpha- and beta-glucoside transport. This Staphylococcus aureus (strain bovine RF122 / ET3-1) protein is PTS system glucoside-specific EIICBA component (glcB).